Reading from the N-terminus, the 59-residue chain is Large ribosomal subunit protein bL32 (59 aa).

The span at 1-16 (MAVPKRKTSPSKRGMR) shows a compositional bias: basic residues. Positions 1 to 41 (MAVPKRKTSPSKRGMRRSADALKAPTYIEDKNSGELRRPHH) are disordered. The segment covering 28–41 (IEDKNSGELRRPHH) has biased composition (basic and acidic residues).

It belongs to the bacterial ribosomal protein bL32 family.

The polypeptide is Large ribosomal subunit protein bL32 (Bartonella henselae (strain ATCC 49882 / DSM 28221 / CCUG 30454 / Houston 1) (Rochalimaea henselae)).